The primary structure comprises 655 residues: Serine/threonine-protein kinase SKM1 (655 aa).

In terms of domain architecture, PH spans 3-118; it reads GVKKEGWISY…WLDAIFAKCP (116 aa). Residues 123–136 form the CRIB domain; it reads VSSPTNFTHKVHVG. 2 stretches are compositionally biased toward basic and acidic residues: residues 265-276 and 318-327; these read EEGRVHVSKEST and KNHDSKTKWH. The segment at 265–327 is disordered; it reads EEGRVHVSKE…KNHDSKTKWH (63 aa). Residues 360–639 form the Protein kinase domain; the sequence is FQLVEKAGQG…VRKLLTFEFL (280 aa). ATP-binding positions include 366 to 374 and Lys406; that span reads AGQGASGAV. The active-site Proton acceptor is the Asp507.

The protein belongs to the protein kinase superfamily. STE Ser/Thr protein kinase family. STE20 subfamily.

The catalysed reaction is L-seryl-[protein] + ATP = O-phospho-L-seryl-[protein] + ADP + H(+). It catalyses the reaction L-threonyl-[protein] + ATP = O-phospho-L-threonyl-[protein] + ADP + H(+). Its function is as follows. May be involved in cellular signaling or cytoskeletal functions. May play a role in morphogenetic control. The protein is Serine/threonine-protein kinase SKM1 (SKM1) of Saccharomyces cerevisiae (strain ATCC 204508 / S288c) (Baker's yeast).